The chain runs to 344 residues: MNTRTDVTNDNIDKNPTKRGDRNIPGRNERFNDQNRFNNDRPQPNQPPRQDNKYREENGDFINIRLCAYEKEYCNDGYLSPAYYMLKQVDDEEMSCWSELSSLVRSRKAVGFPLLKAAKRISHGSMLYFEQFKNSKVVRLTPQVKCLNDTVIFQTVVILYSMYKRGIYSNEFCFNLVSIPRTNIVFSVNQLMFNICTDILVVLSICGNRLYRTNLPQSCYLNFIHGHETIARRGYEHSNYFFEWLIKNHISLLTKQTMDILKVKKKYATGAPVNRLLEPGTLVYVPKEDYYFIGISLTDVSISDNVRVLFSTDGIVLEIEDFNIKHLFMAGEMFVRSQSSTIIV.

Polar residues predominate over residues 1 to 10 (MNTRTDVTND). Positions 1–55 (MNTRTDVTNDNIDKNPTKRGDRNIPGRNERFNDQNRFNNDRPQPNQPPRQDNKYR) are disordered. A compositionally biased stretch (basic and acidic residues) spans 11 to 33 (NIDKNPTKRGDRNIPGRNERFND). Residues 34-43 (QNRFNNDRPQ) show a composition bias toward low complexity.

The protein belongs to the orthopoxvirus OPG097 family.

The protein localises to the virion. It is found in the host cytoplasm. Might be required to be present in the virion for transcription of early genes after primo infection. This Cynomys gunnisoni (Gunnison's prairie dog) protein is Protein OPG097 (OPG097).